Here is a 471-residue protein sequence, read N- to C-terminus: 5-hydroxytryptamine receptor 2A (471 aa).

Residues 1 to 80 (MDILCEENTS…LQEKNWSALL (80 aa)) lie on the Extracellular side of the membrane. The N-linked (GlcNAc...) asparagine glycan is linked to N38. The chain crosses the membrane as a helical span at residues 81-97 (TAVVIILTIAGNILVIM). Over 98-111 (AVSLEKKLQNATNY) the chain is Cytoplasmic. A helical transmembrane segment spans residues 112 to 137 (FLMSLAIADMLLGFLVMPVSMLTILY). Residues 138–146 (GYRWPLPSK) are Extracellular-facing. A helical transmembrane segment spans residues 147–171 (LCAVWIYLDVLFSTASIMHLCAISL). C148 and C227 are disulfide-bonded. D155 is a serotonin binding site. The short motif at 172-174 (DRY) is the DRY motif; important for ligand-induced conformation changes element. At 172–191 (DRYVAIQNPIHHSRFNSRTK) the chain is on the cytoplasmic side. A helical transmembrane segment spans residues 192–215 (AFLKIIAVWTISVGISMPIPVFGL). Topologically, residues 216–232 (QDDSKVFKEGSCLLADD) are extracellular. The chain crosses the membrane as a helical span at residues 233 to 258 (NFVLIGSFVSFFIPLTIMVITYFLTI). Residues 259–322 (KSLQKEATLC…QSISNEQKAC (64 aa)) are Cytoplasmic-facing. The residue at position 280 (S280) is a Phosphoserine. Residues 323–348 (KVLGIVFSLFVVMWCPFFITNIMAVI) traverse the membrane as a helical segment. Position 343 (N343) interacts with serotonin. C349 and C353 are joined by a disulfide. The Extracellular portion of the chain corresponds to 349-356 (CKESCNED). Residues 357–382 (VIGALLNVFVWIGYLSSAVNPLVYTL) form a helical membrane-spanning segment. The NPxxY motif; important for ligand-induced conformation changes and signaling signature appears at 376-380 (NPLVY). Topologically, residues 383–471 (FNKTYRSAFS…DGVNEKVSCV (89 aa)) are cytoplasmic. A disordered region spans residues 450 to 471 (KQHSEDASKDNSDGVNEKVSCV). Residues 451–465 (QHSEDASKDNSDGVN) are compositionally biased toward basic and acidic residues. Residues 469-471 (SCV) carry the PDZ-binding motif.

This sequence belongs to the G-protein coupled receptor 1 family. Interacts (via C-terminus) with MPDZ and PATJ. May interact (via C-terminus) with MPP3, PRDX6, DLG4, DLG1, CASK, APBA1 and MAGI2. Interacts with GRM2 and DRD2; this may affect signaling.

Its subcellular location is the cell membrane. The protein resides in the cell projection. It localises to the dendrite. It is found in the axon. The protein localises to the cytoplasmic vesicle. Its subcellular location is the membrane. The protein resides in the caveola. It localises to the presynapse. With respect to regulation, G-protein coupled receptor activity is regulated by lipids: oleamide increases HTR2A-mediated activity. Functionally, G-protein coupled receptor for 5-hydroxytryptamine (serotonin). Also functions as a receptor for various drugs and psychoactive substances, including mescaline, psilocybin, 1-(2,5-dimethoxy-4-iodophenyl)-2-aminopropane (DOI) and lysergic acid diethylamide (LSD). Ligand binding causes a conformation change that triggers signaling via guanine nucleotide-binding proteins (G proteins) and modulates the activity of downstream effectors. HTR2A is coupled to G(q)/G(11) G alpha proteins and activates phospholipase C-beta, releasing diacylglycerol (DAG) and inositol 1,4,5-trisphosphate (IP3) second messengers that modulate the activity of phosphatidylinositol 3-kinase and promote the release of Ca(2+) ions from intracellular stores, respectively. Beta-arrestin family members inhibit signaling via G proteins and mediate activation of alternative signaling pathways. Affects neural activity, perception, cognition and mood. Plays a role in the regulation of behavior, including responses to anxiogenic situations and psychoactive substances. Plays a role in intestinal smooth muscle contraction, and may play a role in arterial vasoconstriction. This chain is 5-hydroxytryptamine receptor 2A (HTR2A), found in Pongo pygmaeus (Bornean orangutan).